The chain runs to 635 residues: Bifunctional lysine-specific demethylase and histidyl-hydroxylase NO66 (635 aa).

2 disordered regions span residues 1-115 (MSAV…LQNS) and 141-190 (FNGE…KANG). Over residues 84–99 (ASASDINTSASKNVNA) the composition is skewed to low complexity. A compositionally biased stretch (polar residues) spans 141-156 (FNGESLKNNSNHSTPV). The region spanning 295–440 (CSIRMLNPQT…DLLELFFPHA (146 aa)) is the JmjC domain. Fe cation is bound by residues histidine 341, aspartate 343, and histidine 406.

This sequence belongs to the ROX family. NO66 subfamily. It depends on Fe(2+) as a cofactor.

The protein resides in the nucleus. The enzyme catalyses N(6),N(6)-dimethyl-L-lysyl(36)-[histone H3] + 2 2-oxoglutarate + 2 O2 = L-lysyl(36)-[histone H3] + 2 formaldehyde + 2 succinate + 2 CO2. In terms of biological role, oxygenase that can act as both a histone lysine demethylase and a ribosomal histidine hydroxylase. Specifically demethylates 'Lys-4' (H3K4me) and 'Lys-36' (H3K36me) of histone H3, thereby playing a central role in histone code. This is Bifunctional lysine-specific demethylase and histidyl-hydroxylase NO66 from Aedes aegypti (Yellowfever mosquito).